The primary structure comprises 160 residues: Transcriptional regulator MraZ (160 aa).

SpoVT-AbrB domains are found at residues 5-51 and 80-123; these read TFEK…GKAL and MAKL…EREA.

The protein belongs to the MraZ family. In terms of assembly, forms oligomers.

It is found in the cytoplasm. The protein localises to the nucleoid. This chain is Transcriptional regulator MraZ, found in Phenylobacterium zucineum (strain HLK1).